Reading from the N-terminus, the 295-residue chain is Probable alpha-L-glutamate ligase 1 (295 aa).

The ATP-grasp domain maps to 104 to 287 (MQLLSRKGIG…VANAIIEFIE (184 aa)). Residues lysine 141, 178–179 (EY), aspartate 187, and 211–213 (RSN) each bind ATP. Mg(2+) is bound by residues aspartate 248, glutamate 260, and asparagine 262. Mn(2+) is bound by residues aspartate 248, glutamate 260, and asparagine 262.

The protein belongs to the RimK family. Mg(2+) serves as cofactor. It depends on Mn(2+) as a cofactor.

This is Probable alpha-L-glutamate ligase 1 from Shewanella denitrificans (strain OS217 / ATCC BAA-1090 / DSM 15013).